The chain runs to 271 residues: Virulence regulon transcriptional activator VirF (271 aa).

The HTH araC/xylS-type domain occupies 167 to 265 (ERLQKFMEEN…GCTPSQARLT (99 aa)). 2 DNA-binding regions (H-T-H motif) span residues 184 to 205 (SKFAREFGMGLTTFKELFGTVY) and 232 to 255 (IVDIAMEAGFSSQSYFTQSYRRRF).

In terms of biological role, transcriptional activator of the Yersinia virulence regulon. The chain is Virulence regulon transcriptional activator VirF (virF) from Yersinia enterocolitica.